Consider the following 66-residue polypeptide: UPF0337 protein BP1738 (66 aa).

This sequence belongs to the UPF0337 (CsbD) family.

This is UPF0337 protein BP1738 from Bordetella pertussis (strain Tohama I / ATCC BAA-589 / NCTC 13251).